A 184-amino-acid chain; its full sequence is GTP cyclohydrolase 1 (184 aa).

Residues cysteine 75, histidine 78, and cysteine 146 each coordinate Zn(2+).

The protein belongs to the GTP cyclohydrolase I family. In terms of assembly, toroid-shaped homodecamer, composed of two pentamers of five dimers.

The enzyme catalyses GTP + H2O = 7,8-dihydroneopterin 3'-triphosphate + formate + H(+). Its pathway is cofactor biosynthesis; 7,8-dihydroneopterin triphosphate biosynthesis; 7,8-dihydroneopterin triphosphate from GTP: step 1/1. This chain is GTP cyclohydrolase 1, found in Streptococcus sanguinis (strain SK36).